The following is a 270-amino-acid chain: Flavodoxin/ferredoxin--NADP reductase (270 aa).

Residues valine 12 to aspartate 113 form the FAD-binding FR-type domain. FAD contacts are provided by residues arginine 62–serine 65, tyrosine 78–isoleucine 80, and proline 86–threonine 88. Threonine 126 is a binding site for NADP(+). An FAD-binding site is contributed by threonine 128. NADP(+) contacts are provided by residues arginine 156, threonine 192 to arginine 193, arginine 201, and aspartate 238. Alanine 264 to isoleucine 270 is a binding site for FAD.

Belongs to the ferredoxin--NADP reductase type 1 family. In terms of assembly, monomer. FAD serves as cofactor.

It is found in the cytoplasm. It catalyses the reaction 2 reduced [2Fe-2S]-[ferredoxin] + NADP(+) + H(+) = 2 oxidized [2Fe-2S]-[ferredoxin] + NADPH. The catalysed reaction is reduced [flavodoxin] + NADP(+) = oxidized [flavodoxin] + NADPH + 2 H(+). Functionally, transports electrons between flavodoxin or ferredoxin and NADPH. This chain is Flavodoxin/ferredoxin--NADP reductase, found in Rhodobacter capsulatus (Rhodopseudomonas capsulata).